We begin with the raw amino-acid sequence, 138 residues long: ATP synthase epsilon chain (138 aa).

This sequence belongs to the ATPase epsilon chain family. As to quaternary structure, F-type ATPases have 2 components, CF(1) - the catalytic core - and CF(0) - the membrane proton channel. CF(1) has five subunits: alpha(3), beta(3), gamma(1), delta(1), epsilon(1). CF(0) has three main subunits: a, b and c.

It is found in the cell inner membrane. In terms of biological role, produces ATP from ADP in the presence of a proton gradient across the membrane. This is ATP synthase epsilon chain from Vesicomyosocius okutanii subsp. Calyptogena okutanii (strain HA).